We begin with the raw amino-acid sequence, 142 residues long: 3-hydroxyacyl-[acyl-carrier-protein] dehydratase FabZ (142 aa).

Residue His-41 is part of the active site.

It belongs to the thioester dehydratase family. FabZ subfamily.

Its subcellular location is the cytoplasm. The enzyme catalyses a (3R)-hydroxyacyl-[ACP] = a (2E)-enoyl-[ACP] + H2O. Involved in unsaturated fatty acids biosynthesis. Catalyzes the dehydration of short chain beta-hydroxyacyl-ACPs and long chain saturated and unsaturated beta-hydroxyacyl-ACPs. This chain is 3-hydroxyacyl-[acyl-carrier-protein] dehydratase FabZ, found in Symbiobacterium thermophilum (strain DSM 24528 / JCM 14929 / IAM 14863 / T).